The following is a 460-amino-acid chain: Diguanylate cyclase DosC (460 aa).

A heme-binding site is contributed by His-98. Residues 325 to 458 (TPLSVLIIDV…GRNRVELWKA (134 aa)) enclose the GGDEF domain. Asp-333 provides a ligand contact to Mg(2+). 2 residues coordinate substrate: Asn-341 and Asp-350. Asp-376 is a binding site for Mg(2+). Asp-376 (proton acceptor) is an active-site residue.

Requires heme as cofactor. Mg(2+) serves as cofactor.

The catalysed reaction is 2 GTP = 3',3'-c-di-GMP + 2 diphosphate. It participates in purine metabolism; 3',5'-cyclic di-GMP biosynthesis. Functionally, globin-coupled heme-based oxygen sensor protein displaying diguanylate cyclase (DGC) activity in response to oxygen availability. Thus, catalyzes the synthesis of cyclic diguanylate (c-di-GMP) via the condensation of 2 GTP molecules. Cyclic-di-GMP is a second messenger which controls cell surface-associated traits in bacteria. The protein is Diguanylate cyclase DosC (dosC) of Shigella sonnei (strain Ss046).